The following is a 280-amino-acid chain: S-methyl-5'-thioadenosine phosphorylase (280 aa).

Phosphate is bound by residues Ser15, 57 to 58, and 90 to 91; these read RH and TA. Met193 provides a ligand contact to substrate. Thr194 is a binding site for phosphate. 217–219 provides a ligand contact to substrate; sequence DYD.

Belongs to the PNP/MTAP phosphorylase family. MTAP subfamily. Homotrimer.

It is found in the cytoplasm. The protein localises to the nucleus. It catalyses the reaction S-methyl-5'-thioadenosine + phosphate = 5-(methylsulfanyl)-alpha-D-ribose 1-phosphate + adenine. It functions in the pathway amino-acid biosynthesis; L-methionine biosynthesis via salvage pathway; S-methyl-5-thio-alpha-D-ribose 1-phosphate from S-methyl-5'-thioadenosine (phosphorylase route): step 1/1. In terms of biological role, catalyzes the reversible phosphorylation of S-methyl-5'-thioadenosine (MTA) to adenine and 5-methylthioribose-1-phosphate. Involved in the breakdown of MTA, a major by-product of polyamine biosynthesis. Responsible for the first step in the methionine salvage pathway after MTA has been generated from S-adenosylmethionine. Has broad substrate specificity with 6-aminopurine nucleosides as preferred substrates. The protein is S-methyl-5'-thioadenosine phosphorylase (mtap) of Danio rerio (Zebrafish).